Reading from the N-terminus, the 341-residue chain is Protein DOWNY MILDEW RESISTANCE 6 (341 aa).

The 101-residue stretch at 188–288 (QGQHMAVNYY…RLSVASFLCP (101 aa)) folds into the Fe2OG dioxygenase domain. 3 residues coordinate Fe cation: H212, D214, and H269. R279 provides a ligand contact to 2-oxoglutarate.

It belongs to the iron/ascorbate-dependent oxidoreductase family. Requires Fe(2+) as cofactor.

It carries out the reaction salicylate + NADH + O2 + H(+) = 2,3-dihydroxybenzoate + NAD(+) + H2O. Its function is as follows. Converts salicylic acid (SA) to 2,3-dihydroxybenzoic acid (2,3-DHBA). Suppressor of immunity. Regulates negatively defense associated genes expression (e.g. PR-1, PR-2, and PR-5). Negative regulator of defense against Hyaloperonospora arabidopsidis. In terms of biological role, (Microbial infection) Required for susceptibility to the downy mildew pathogen Hyaloperonospora arabidopsidis. Functionally, (Microbial infection) Required for susceptibility to Pseudomonas syringae pv. tomato DC3000. (Microbial infection) Required for susceptibility to the oomycete Phytophthora capsici. The polypeptide is Protein DOWNY MILDEW RESISTANCE 6 (Arabidopsis thaliana (Mouse-ear cress)).